A 124-amino-acid chain; its full sequence is UPF0102 protein Noc_0355 (124 aa).

It belongs to the UPF0102 family.

This is UPF0102 protein Noc_0355 from Nitrosococcus oceani (strain ATCC 19707 / BCRC 17464 / JCM 30415 / NCIMB 11848 / C-107).